Consider the following 290-residue polypeptide: O-methyltransferase agiB (290 aa).

D155 is a binding site for S-adenosyl-L-methionine. The active-site Proton acceptor is H194.

Belongs to the class I-like SAM-binding methyltransferase superfamily. Cation-independent O-methyltransferase family.

Its pathway is secondary metabolite biosynthesis. In terms of biological role, O-methyltransferase; part of the gene cluster that mediates the biosynthesis of the aspergillicins A and F, 2 cryptic cyclic hexa-depsipeptides. The hexamodular NRPS agiA catalyzes the condensation of the six amino acid residues including N-Me-L-O-Me-tyrosine, L-proline 1, L-proline 2, D-isoleucine, O-acetyl-threonine, and L-isoleucine. The starting condensation domain (C1) of agiA probably loads acetyl-CoA which is condensed on the N-terminus of threonine by the first module to yield O-acetyl-threonine. The second module then loads L-isoleucine. The epimerase (E) domain on module 2 is probably involved in the formation of the D-isoleucine moiety. Modules 3 and 4 further load 2 successive L-prolines. Module 5 is then involved in the condensation of O-Me-L-tyrosine produced by the O-methyltransferase agiB and the N-methyl transferase (NMeT) domain on module 5 probably catalyzes the N-methylation to yield the N-Me-L-O-Me-tyrosine moiety. The A domain of module 5 loads preferentially O-Me-L-tyrosine, but it can also accept L-phenylalanine, which leads to the production of aspergillicin G. Module 6 then loads the last residue, L-isoleucine. The C-terminal thiolesterase (TE) domain probably cyclizes the peptide using the hydroxy group from threonine to form the cyclic depsipeptide. The protein is O-methyltransferase agiB of Aspergillus flavus (strain ATCC 200026 / FGSC A1120 / IAM 13836 / NRRL 3357 / JCM 12722 / SRRC 167).